The primary structure comprises 153 residues: Large ribosomal subunit protein bL9 (153 aa).

Belongs to the bacterial ribosomal protein bL9 family.

Binds to the 23S rRNA. The chain is Large ribosomal subunit protein bL9 from Koribacter versatilis (strain Ellin345).